A 90-amino-acid polypeptide reads, in one-letter code: Cytochrome c7 (90 aa).

A signal peptide spans 1–20; that stretch reads MKRIIASLALSVFCAGLAFA. 12 residues coordinate heme: His-37, His-40, Cys-47, Cys-50, His-51, His-67, Cys-70, Cys-73, His-74, Cys-84, Cys-87, and His-88.

In terms of processing, binds 3 heme groups per subunit.

In terms of biological role, may be involved in anaerobic iron respiration. This is Cytochrome c7 from Geobacter metallireducens (strain ATCC 53774 / DSM 7210 / GS-15).